A 225-amino-acid polypeptide reads, in one-letter code: RNA-binding protein 24 (225 aa).

In terms of domain architecture, RRM spans 11 to 88 (TKIFVGGLPY…RKANVNLAYL (78 aa)).

It localises to the nucleus. The protein localises to the cytoplasm. Its function is as follows. Multifunctional RNA-binding protein involved in the regulation of pre-mRNA splicing, mRNA stability and mRNA translation important for cell fate decision and differentiation. Plays a major role in pre-mRNA alternative splicing regulation. Mediates preferentially muscle-specific exon inclusion in numerous mRNAs important for striated cardiac and skeletal muscle cell differentiation. Binds to intronic splicing enhancer (ISE) composed of stretches of GU-rich motifs localized in flanking intron of exon that will be included by alternative splicing. Involved in embryonic stem cell (ESC) transition to cardiac cell differentiation by promoting pre-mRNA alternative splicing events of several pluripotency and/or differentiation genes. Plays a role in the regulation of mRNA stability and mRNA translation to which it is bound. Involved in myogenic differentiation by regulating MYOG levels. Binds to a huge amount of mRNAs. Involved in embryonic heart development and myogenic differentiation of somitic muscle progenitors. The sequence is that of RNA-binding protein 24 from Gallus gallus (Chicken).